The primary structure comprises 123 residues: Gamma-synuclein (123 aa).

2 repeat units span residues 20 to 30 and 31 to 41. Residues 20–67 form a 4 X 11 AA tandem repeats of [EGSA]-K-T-K-[EQ]-[GQ]-V-X(4) region; sequence EKTKQGVTEAAEKTKEGVMYVGTKTKGERGTSVTSVAEKTKEQANAVS. A 3; approximate repeat occupies 42–56; sequence TKTKGERGTSVTSVA. Residues 57–67 form repeat 4; that stretch reads EKTKEQANAVS. Phosphoserine is present on residues Ser-67 and Ser-72. Residues 93–123 form a disordered region; sequence GVVRKEDLEPPAQDQEAKEQEEGEEAKSGGD. Positions 107–123 are enriched in basic and acidic residues; that stretch reads QEAKEQEEGEEAKSGGD. Phosphoserine; by BARK1, CaMK2 and CK2 is present on Ser-120.

This sequence belongs to the synuclein family. May be a centrosome-associated protein. Interacts with MYOC; affects its secretion and its aggregation. Post-translationally, phosphorylated. Phosphorylation by GRK5 appears to occur on residues distinct from the residue phosphorylated by other kinases. Specifically expressed in the peripheral nervous system. High expression in motoneurons of the brainstem. Also found in neurons of many other brain regions including the cerebellar cortex, thalamus, hypothalamus and CA1, CA2, CA3 and CA4 regions of the hippocampus.

The protein localises to the cytoplasm. Its subcellular location is the perinuclear region. It is found in the cytoskeleton. The protein resides in the microtubule organizing center. It localises to the centrosome. The protein localises to the spindle. Functionally, plays a role in neurofilament network integrity. May be involved in modulating axonal architecture during development and in the adult. In vitro, increases the susceptibility of neurofilament-H to calcium-dependent proteases. May also function in modulating the keratin network in skin. Activates the MAPK and Elk-1 signal transduction pathway. This is Gamma-synuclein (Sncg) from Rattus norvegicus (Rat).